Consider the following 794-residue polypeptide: Protein SPA1-RELATED 4 (794 aa).

The Protein kinase domain maps to 1–268 (MKGSSESSSR…MSELLQSEFI (268 aa)). The interval 126-165 (SCSDSGSDEDATTKSREIGSSRQEEILSERRSKQQEEVKK) is disordered. The segment covering 136-165 (ATTKSREIGSSRQEEILSERRSKQQEEVKK) has biased composition (basic and acidic residues). The stretch at 272-326 (RENLEEREAAMELRDRIEEQELLLEFLFLIQQRKQEAADKLQDTISLLSSDIDQV) forms a coiled coil. 2 disordered regions span residues 352–373 (QGAETTAAEEENDDNSIDEESK) and 428–447 (GRSSEKSSMSQPSKDPINDS). A compositionally biased stretch (acidic residues) spans 358 to 369 (AAEEENDDNSID). WD repeat units follow at residues 482-521 (NSSNLVCAIGFDRDGEFFATAGVNKKIKIFECESIIKDGR), 531-571 (ASRS…LVTE), 574-614 (EHEK…SIGT), 616-656 (KTKA…LPLC), 660-698 (GHHKTVSYVRFVDSSTLVSSSTDNTLKLWDLSMSISGIN), 707-746 (GHTNVKNFVGLSVSDGYIATGSETNEVFVYHKAFPMPVLS), and 762-794 (DASQFISSVCWRGQSSTLVAANSTGNIKILEMV). The DWD box signature appears at 635-649 (AFGSADHKVYYYDLR).

In terms of assembly, interacts with COP1 and CO. Binds to CRY1 in response to blue light, this interaction prevents SPA1/COP1 complex formation and thus avoid COP1-dependent degradation of the transcription factor HY5 by the proteasome and promotes hypocotyl elongation.

Its subcellular location is the nucleus. Repressor of photomorphogenesis in the light. Probably part of the COP1/SPA E3 ubiquitin-protein ligase complex. In Arabidopsis thaliana (Mouse-ear cress), this protein is Protein SPA1-RELATED 4 (SPA4).